Consider the following 450-residue polypeptide: Chromosomal replication initiator protein DnaA (450 aa).

Positions 1 to 69 (MHDVWRQATE…VGALSVTAGK (69 aa)) are domain I, interacts with DnaA modulators. The segment at 69–113 (KKYFIELVVQEEDQNAEVPQAEDLIIKGHQEIEQPVTSQPETSSS) is domain II. The segment at 114 to 330 (SLNPKYTFEL…GMLIRLGAYS (217 aa)) is domain III, AAA+ region. Glycine 158, glycine 160, lysine 161, and serine 162 together coordinate ATP. The segment at 331–450 (SLQGIPITLD…IEDIKLILLK (120 aa)) is domain IV, binds dsDNA.

This sequence belongs to the DnaA family. As to quaternary structure, oligomerizes as a right-handed, spiral filament on DNA at oriC.

The protein localises to the cytoplasm. Plays an essential role in the initiation and regulation of chromosomal replication. ATP-DnaA binds to the origin of replication (oriC) to initiate formation of the DNA replication initiation complex once per cell cycle. Binds the DnaA box (a 9 base pair repeat at the origin) and separates the double-stranded (ds)DNA. Forms a right-handed helical filament on oriC DNA; dsDNA binds to the exterior of the filament while single-stranded (ss)DNA is stabiized in the filament's interior. The ATP-DnaA-oriC complex binds and stabilizes one strand of the AT-rich DNA unwinding element (DUE), permitting loading of DNA polymerase. After initiation quickly degrades to an ADP-DnaA complex that is not apt for DNA replication. Binds acidic phospholipids. The protein is Chromosomal replication initiator protein DnaA of Pelobacter propionicus (strain DSM 2379 / NBRC 103807 / OttBd1).